A 356-amino-acid chain; its full sequence is Branched-chain-amino-acid aminotransferase 6 (356 aa).

At Lys199 the chain carries N6-(pyridoxal phosphate)lysine.

This sequence belongs to the class-IV pyridoxal-phosphate-dependent aminotransferase family. Pyridoxal 5'-phosphate serves as cofactor.

It is found in the cytoplasm. The enzyme catalyses L-leucine + 2-oxoglutarate = 4-methyl-2-oxopentanoate + L-glutamate. The catalysed reaction is L-isoleucine + 2-oxoglutarate = (S)-3-methyl-2-oxopentanoate + L-glutamate. It carries out the reaction L-valine + 2-oxoglutarate = 3-methyl-2-oxobutanoate + L-glutamate. It participates in amino-acid biosynthesis; L-isoleucine biosynthesis; L-isoleucine from 2-oxobutanoate: step 4/4. It functions in the pathway amino-acid biosynthesis; L-leucine biosynthesis; L-leucine from 3-methyl-2-oxobutanoate: step 4/4. Its pathway is amino-acid biosynthesis; L-valine biosynthesis; L-valine from pyruvate: step 4/4. Converts 2-oxo acids to branched-chain amino acids. Acts on leucine, isoleucine and valine. This Arabidopsis thaliana (Mouse-ear cress) protein is Branched-chain-amino-acid aminotransferase 6 (BCAT6).